A 1069-amino-acid polypeptide reads, in one-letter code: Carbamoyl phosphate synthase large chain (1069 aa).

The carboxyphosphate synthetic domain stretch occupies residues 1-401; that stretch reads MPLNKDIKKV…AFLKGIRSLE (401 aa). ATP contacts are provided by R129, R169, G175, G176, K208, V210, E215, G241, I242, H243, Q284, and E298. Residues 133 to 327 enclose the ATP-grasp 1 domain; that stretch reads RDMMNRIGEP…IAKLAAKIAL (195 aa). Q284, E298, and N300 together coordinate Mg(2+). The Mn(2+) site is built by Q284, E298, and N300. The segment at 402 to 549 is oligomerization domain; it reads IGKYSLDHKK…YSTYEQYDEV (148 aa). The tract at residues 550-932 is carbamoyl phosphate synthetic domain; it reads EVSNRRKVIV…ALYKGFVGAN (383 aa). The 191-residue stretch at 674 to 864 folds into the ATP-grasp 2 domain; that stretch reads DELLERLDIS…IVDIATQVMM (191 aa). Residues R710, K749, L751, E755, G780, V781, H782, S783, Q823, and E835 each contribute to the ATP site. Residues Q823, E835, and N837 each coordinate Mg(2+). Mn(2+) is bound by residues Q823, E835, and N837. One can recognise an MGS-like domain in the interval 932–1069; it reads NMYPSKEKGK…KDLEVFDITK (138 aa). The allosteric domain stretch occupies residues 933-1069; that stretch reads MYPSKEKGKI…KDLEVFDITK (137 aa).

The protein belongs to the CarB family. Composed of two chains; the small (or glutamine) chain promotes the hydrolysis of glutamine to ammonia, which is used by the large (or ammonia) chain to synthesize carbamoyl phosphate. Tetramer of heterodimers (alpha,beta)4. Mg(2+) serves as cofactor. Requires Mn(2+) as cofactor.

It catalyses the reaction hydrogencarbonate + L-glutamine + 2 ATP + H2O = carbamoyl phosphate + L-glutamate + 2 ADP + phosphate + 2 H(+). The enzyme catalyses hydrogencarbonate + NH4(+) + 2 ATP = carbamoyl phosphate + 2 ADP + phosphate + 2 H(+). It participates in amino-acid biosynthesis; L-arginine biosynthesis; carbamoyl phosphate from bicarbonate: step 1/1. The protein operates within pyrimidine metabolism; UMP biosynthesis via de novo pathway; (S)-dihydroorotate from bicarbonate: step 1/3. Large subunit of the glutamine-dependent carbamoyl phosphate synthetase (CPSase). CPSase catalyzes the formation of carbamoyl phosphate from the ammonia moiety of glutamine, carbonate, and phosphate donated by ATP, constituting the first step of 2 biosynthetic pathways, one leading to arginine and/or urea and the other to pyrimidine nucleotides. The large subunit (synthetase) binds the substrates ammonia (free or transferred from glutamine from the small subunit), hydrogencarbonate and ATP and carries out an ATP-coupled ligase reaction, activating hydrogencarbonate by forming carboxy phosphate which reacts with ammonia to form carbamoyl phosphate. In Clostridium botulinum (strain Eklund 17B / Type B), this protein is Carbamoyl phosphate synthase large chain.